A 227-amino-acid chain; its full sequence is tRNA (guanine-N(1)-)-methyltransferase (227 aa).

S-adenosyl-L-methionine-binding positions include G110 and 129–134 (IGDYVL).

Belongs to the RNA methyltransferase TrmD family. As to quaternary structure, homodimer.

The protein localises to the cytoplasm. It catalyses the reaction guanosine(37) in tRNA + S-adenosyl-L-methionine = N(1)-methylguanosine(37) in tRNA + S-adenosyl-L-homocysteine + H(+). In terms of biological role, specifically methylates guanosine-37 in various tRNAs. The polypeptide is tRNA (guanine-N(1)-)-methyltransferase (Mycoplasmopsis synoviae (strain 53) (Mycoplasma synoviae)).